A 1270-amino-acid chain; its full sequence is DNA-directed RNA polymerase subunit beta (1270 aa).

This sequence belongs to the RNA polymerase beta chain family. The RNAP catalytic core consists of 2 alpha, 1 beta, 1 beta' and 1 omega subunit. When a sigma factor is associated with the core the holoenzyme is formed, which can initiate transcription.

It carries out the reaction RNA(n) + a ribonucleoside 5'-triphosphate = RNA(n+1) + diphosphate. DNA-dependent RNA polymerase catalyzes the transcription of DNA into RNA using the four ribonucleoside triphosphates as substrates. The chain is DNA-directed RNA polymerase subunit beta from Phocaeicola vulgatus (strain ATCC 8482 / DSM 1447 / JCM 5826 / CCUG 4940 / NBRC 14291 / NCTC 11154) (Bacteroides vulgatus).